The following is a 391-amino-acid chain: Probable sugar efflux transporter (391 aa).

12 consecutive transmembrane segments (helical) span residues V16–L36, V51–L71, L82–F102, M110–V130, Q138–G158, T170–P190, P210–Y230, I247–S267, F277–N297, W300–L320, I338–I358, and L361–L381.

It belongs to the major facilitator superfamily. SotB (TC 2.A.1.2) family.

The protein localises to the cell inner membrane. Its function is as follows. Involved in the efflux of sugars. The physiological role may be the reduction of the intracellular concentration of toxic sugars or sugar metabolites. The sequence is that of Probable sugar efflux transporter from Helicobacter pylori (strain HPAG1).